Here is a 1016-residue protein sequence, read N- to C-terminus: MGSVDGDFEGLQAADRRAEVIEWLNALLPEYCLPLDSSDDELRELLSDGTVLCHIVNALIPGVLEESWGAYASSDQHAGHVKKFLAVVADMGLPGFSVKDLEEGSMSGVVDCLLVLRESVSSGLRDGTSKAPLRKKWRVPETGEPLVPGVAQGKTSPGEDKRNGLPDPKSQQKTPIFNGRKLREIFQLKRGSYADLPAAKISEMMHSNSLDNAPTQSLLSVVNGILDESIERKKGEIPHRVVYLLRKVVQEIERRLCIQAEHIRSQNVIIKTREDKYHSKIKALEILVNGTNEENQMAINRLQIIKEEKSKIEEKRKLGEQDVARLMKEKEISENTIASLKKEMEVMTSMHEQQLQKIELTAKQMEEHLTTKIKEVESLLVQSNKKIEEVEAASLLKSQLWNKKEGIFQKYMNSQQLYVKGLRISSWSIKNEMHALEMELRDEMSNFGSGLKCLVDAAENYHKVLAENQKLFNEVQELKGNIRVYCRVRPFLPGQDKKSTTVDYIGENGELLISNPFKQGKDGHRMFKFNKVFSPFSSQAEVFSDIQPLIRSVLDGFNVCIFAYGQTGSGKTYTMSGPSTSKQDWGVNYRALNDLFDISLSRRNAFSYEVGVQMVEIYNEQVRDLLSNDIAQKRLGIWSTSQPNGLVVPDASLHPVKSTSDVLDLMEIGQANRAVGSTALNERSSRSHSILTVHVRGLDVKNGSTSRGCLHLIDLAGSERVERSEATGDRLKEAQHINKSLSALGDVIFALAQKNAHVPYRNSKLTQVLQSSLGGQAKTLMFVQINPDVESYSETISTLKFAERVSGVELGAARSNKEGKDIKELLEQVASLKDTIVRKDTEIEQLQLMKDKVKSPSFAVDINGASMPKNSNSDLRSVLSITTNQQSQLSDPQSYAEVNRDGGPTSYTDITPTCLDEADFEDNASEDGFSGGTDYSVGCAAGASVFPNSCSDRTADTSIRRISSRIARFSLTKNGQPATSRPKPKDTAPKTPNQTRVQSSQLIGGSSLRASKRWQK.

A Calponin-homology (CH) domain is found at 14–121 (ADRRAEVIEW…CLLVLRESVS (108 aa)). The tract at residues 123–176 (GLRDGTSKAPLRKKWRVPETGEPLVPGVAQGKTSPGEDKRNGLPDPKSQQKTPI) is disordered. Positions 288–354 (VNGTNEENQM…EVMTSMHEQQ (67 aa)) form a coiled coil. The 328-residue stretch at 481 to 808 (NIRVYCRVRP…LKFAERVSGV (328 aa)) folds into the Kinesin motor domain. 565-572 (GQTGSGKT) contacts ATP. Positions 820-852 (KDIKELLEQVASLKDTIVRKDTEIEQLQLMKDK) form a coiled coil. Polar residues-rich tracts occupy residues 884–893 (NQQSQLSDPQ) and 990–1004 (KTPNQTRVQSSQLIG). Disordered stretches follow at residues 884 to 912 (NQQSQLSDPQSYAEVNRDGGPTSYTDITP) and 971 to 1016 (LTKN…RWQK).

This sequence belongs to the TRAFAC class myosin-kinesin ATPase superfamily. Kinesin family. KIN-14 subfamily.

The chain is Kinesin-like protein KIN-14K from Oryza sativa subsp. japonica (Rice).